Reading from the N-terminus, the 865-residue chain is Nicotinate catabolism cluster-specific transcription factor (865 aa).

2 C2H2-type zinc fingers span residues 8 to 32 (HACTYPGCSKAFTRAEHLRRHSLNH) and 41 to 63 (YTCQRCMTHFSRADLLSRHLDRH). Residues 74-168 (GKGVLETRKR…SIDDDGTDPD (95 aa)) form a disordered region. A Nuclear localization signal(NLS) motif is present at residues 77–87 (VLETRKRMRRA). Positions 78 to 89 (LETRKRMRRAED) are enriched in basic and acidic residues. Residues 96 to 105 (PPKRPSRHQQ) are compositionally biased toward basic residues. Low complexity predominate over residues 108 to 132 (GPPVGAPLSSSGSVSAGSGRSSRSP). The Nuclear export signal (NES) motif lies at 285-289 (LDIDL).

It localises to the nucleus. Its function is as follows. Transcription factor that specifically regulates the expression of the hxn gene cluster that mediates the degradation of nicotinate and related metabolites. This is Nicotinate catabolism cluster-specific transcription factor from Emericella nidulans (strain FGSC A4 / ATCC 38163 / CBS 112.46 / NRRL 194 / M139) (Aspergillus nidulans).